We begin with the raw amino-acid sequence, 540 residues long: Probable quinate permease (540 aa).

Residues 1–22 (MSILALVEDRPTPKEVYNWRIY) lie on the Cytoplasmic side of the membrane. A helical transmembrane segment spans residues 23–43 (LLAAVASFTSCMIGYDSAFIG). Residues 44–74 (TTLALGSFREEFEFTTMEPAAVNRVSANIVS) are Extracellular-facing. The helical transmembrane segment at 75 to 95 (CYQAGAFFGAFFAYPIGHFWG) threads the bilayer. Residues 96 to 97 (RK) are Cytoplasmic-facing. A helical membrane pass occupies residues 98-118 (WGLLSAAAIFTLGAGLMLGAN). Over 119 to 130 (GDRGLGLIYGGR) the chain is Extracellular. The helical transmembrane segment at 131 to 151 (VLAGIGVGAGSNITPIYISEL) threads the bilayer. Residues 152–157 (APPSIR) lie on the Cytoplasmic side of the membrane. A helical membrane pass occupies residues 158–178 (GHLVGVYELGWQIGGLVGFWI). Over 179–193 (NYGVSETLAPSHKQW) the chain is Extracellular. Residues 194-214 (IIPFAVQLIPSGLLLIGAVFL) traverse the membrane as a helical segment. Residues 215 to 285 (RESPRWLFSS…AGTNKKVMYR (71 aa)) are Cytoplasmic-facing. The chain crosses the membrane as a helical span at residues 286-306 (LFLGSMLFFWQNGSGINAINY). Residues 307–325 (YSPTVFKSIGLRGTNTGMF) are Extracellular-facing. A helical transmembrane segment spans residues 326–346 (STGIFGVVKTVVTFIWLLYLI). Residues 347–352 (DRMGRR) are Cytoplasmic-facing. Residues 353 to 373 (LLLLVGAAGASVCLWIVGAYI) traverse the membrane as a helical segment. The Extracellular segment spans residues 374 to 387 (KIANPAKNGNGEMT). Residues 388-408 (GGGIAAMFFFYLYTVFYTPSW) form a helical membrane-spanning segment. Topologically, residues 409-456 (NGTPWVMNSEMFEPNMRSLAQACAAASNWLWNFLISRFTPQMFDKMGY) are cytoplasmic. Residues 457–477 (GVWFFFASLMLCSIVIVFFLI) traverse the membrane as a helical segment. The Extracellular portion of the chain corresponds to 478–540 (PETKGIPLES…RLESVQPKEA (63 aa)). The interval 519–540 (IEESGYTKSGEQRLESVQPKEA) is disordered. The span at 528 to 540 (GEQRLESVQPKEA) shows a compositional bias: basic and acidic residues.

This sequence belongs to the major facilitator superfamily. Sugar transporter (TC 2.A.1.1) family. Interacts with creB. Ubiquitinated. Deubiquitinated by creB, probably to control its activity or amount.

Its subcellular location is the cell membrane. Its function is as follows. Integral membrane transporter that imports quinic acid to be catabolized as a carbon source. In Aspergillus clavatus (strain ATCC 1007 / CBS 513.65 / DSM 816 / NCTC 3887 / NRRL 1 / QM 1276 / 107), this protein is Probable quinate permease (qutD).